The primary structure comprises 152 residues: Large ribosomal subunit protein bL9 (152 aa).

The interval 41 to 61 (QSAMSQLNAERKAEQRREAEE) is disordered. Residues 49–61 (AERKAEQRREAEE) are compositionally biased toward basic and acidic residues.

This sequence belongs to the bacterial ribosomal protein bL9 family.

Functionally, binds to the 23S rRNA. This chain is Large ribosomal subunit protein bL9, found in Levilactobacillus brevis (strain ATCC 367 / BCRC 12310 / CIP 105137 / JCM 1170 / LMG 11437 / NCIMB 947 / NCTC 947) (Lactobacillus brevis).